Consider the following 808-residue polypeptide: Probable E3 ubiquitin-protein ligase MARCHF10 (808 aa).

Disordered stretches follow at residues leucine 33 to proline 81, glutamine 101 to serine 268, and serine 284 to valine 415. A compositionally biased stretch (basic and acidic residues) spans arginine 34–glutamine 49. Polar residues predominate over residues glutamine 237–serine 249. 2 stretches are compositionally biased toward basic and acidic residues: residues lysine 330–proline 349 and leucine 379–lysine 397. The segment at aspartate 651–aspartate 721 adopts an RING-CH-type zinc-finger fold. Zn(2+) contacts are provided by cysteine 659, cysteine 662, cysteine 677, cysteine 679, histidine 687, cysteine 690, cysteine 711, and cysteine 714. Residues glutamate 773 to valine 808 are disordered.

It catalyses the reaction S-ubiquitinyl-[E2 ubiquitin-conjugating enzyme]-L-cysteine + [acceptor protein]-L-lysine = [E2 ubiquitin-conjugating enzyme]-L-cysteine + N(6)-ubiquitinyl-[acceptor protein]-L-lysine.. It functions in the pathway protein modification; protein ubiquitination. E3 ubiquitin-protein ligase. E3 ubiquitin ligases accept ubiquitin from an E2 ubiquitin-conjugating enzyme in the form of a thioester and then directly transfer the ubiquitin to targeted substrates. The polypeptide is Probable E3 ubiquitin-protein ligase MARCHF10 (Homo sapiens (Human)).